Reading from the N-terminus, the 292-residue chain is tRNA-splicing endonuclease (292 aa).

Catalysis depends on residues tyrosine 231, histidine 238, and lysine 267.

The protein belongs to the tRNA-intron endonuclease family. Archaeal long subfamily. Homodimer.

It carries out the reaction pretRNA = a 3'-half-tRNA molecule with a 5'-OH end + a 5'-half-tRNA molecule with a 2',3'-cyclic phosphate end + an intron with a 2',3'-cyclic phosphate and a 5'-hydroxyl terminus.. In terms of biological role, endonuclease that removes tRNA introns. Cleaves pre-tRNA at the 5'- and 3'-splice sites to release the intron. The products are an intron and two tRNA half-molecules bearing 2',3' cyclic phosphate and 5'-OH termini. Recognizes a pseudosymmetric substrate in which 2 bulged loops of 3 bases are separated by a stem of 4 bp. The protein is tRNA-splicing endonuclease of Thermoplasma volcanium (strain ATCC 51530 / DSM 4299 / JCM 9571 / NBRC 15438 / GSS1).